The sequence spans 513 residues: Transcription factor SOX-9 (513 aa).

Disordered regions lie at residues 1–67 (MNLL…SEED) and 160–273 (RLRV…FRDV). A compositionally biased stretch (low complexity) spans 30-41 (SAGSPCPSGSGS). Polar residues predominate over residues 42-52 (DTENTRPQENT). Basic and acidic residues-rich tracts occupy residues 56–67 (GEPDLKKESEED) and 160–174 (RLRV…DYKY). Positions 63–103 (ESEEDKFPVCIREAVSQVLKGYDWTLVPMPVRVNGSSKNKP) are dimerization (DIM). A PQA region spans residues 63 to 103 (ESEEDKFPVCIREAVSQVLKGYDWTLVPMPVRVNGSSKNKP). At Ser64 the chain carries Phosphoserine. A DNA-binding region (HMG box) is located at residues 105–173 (VKRPMNAFMV…QHKKDHPDYK (69 aa)). Ser211 is subject to Phosphoserine. A transactivation domain (TAM) region spans residues 224–307 (PGKHSGQSQG…LPPNGHPGVP (84 aa)). 2 short sequence motifs (9aaTAD) span residues 275–284 (IGELSSDVIS) and 290–298 (DVNEFDQYL). A disordered region spans residues 334–447 (VWMSKQQAPP…PITRSQYDYT (114 aa)). The segment covering 341–380 (APPPPPPPPQQSPQAPPQPPQAPPQAPQAPPQPQPAPPQP) has biased composition (pro residues). Polar residues predominate over residues 387 to 423 (TPLSSEPGQAQRTHIKTEQLSPSHYSEQQQHSPQQIA). Positions 398-513 (RTHIKTEQLS…QPVYTQLTRP (116 aa)) are transactivation domain (TAC). A Glycyl lysine isopeptide (Lys-Gly) (interchain with G-Cter in ubiquitin) cross-link involves residue Lys402. The 9aaTAD 3 signature appears at 464–472 (SSLYSTFTY). The disordered stretch occupies residues 483 to 513 (PIADTSGVPSIPQTHSPQHWEQPVYTQLTRP). Residues 489-513 (GVPSIPQTHSPQHWEQPVYTQLTRP) show a composition bias toward polar residues.

Homodimer; homodimerization is required for activity. Interacts (via C-terminus) with ZNF219; forming a complex that binds to the COL2A1 promoter and activates COL2A1 expression. Interacts with DDRGK1. Interacts with EP300/p300. Interacts with beta-catenin (CTNNB1); inhibiting CTNNB1 activity by competing with the binding sites of TCF/LEF within CTNNB1. Acetylated; acetylation impairs nuclear localization and ability to transactivate expression of target genes. Deacetylated by SIRT1. Post-translationally, phosphorylation at Ser-64 and Ser-211 by PKA increases transcriptional activity and may help delay chondrocyte maturation downstream of PTHLH/PTHrP signaling. Phosphorylation at either Ser-64 or Ser-211 is required for sumoylation, but phosphorylation is not dependent on sumoylation. Phosphorylated on tyrosine residues; tyrosine dephosphorylation by PTPN11/SHP2 blocks SOX9 phosphorylation by PKA and subsequent SUMOylation. In terms of processing, sumoylated; phosphorylation at either Ser-64 or Ser-211 is required for sumoylation. Sumoylation is induced by BMP signaling pathway. Ubiquitinated; ubiquitination leads to proteasomal degradation and is negatively regulated by DDRGK1.

The protein resides in the nucleus. Transcription factor that plays a key role in chondrocytes differentiation and skeletal development. Specifically binds the 5'-ACAAAG-3' DNA motif present in enhancers and super-enhancers and promotes expression of genes important for chondrogenesis, including cartilage matrix protein-coding genes COL2A1, COL4A2, COL9A1, COL11A2 and ACAN, SOX5 and SOX6. Also binds to some promoter regions. Plays a central role in successive steps of chondrocyte differentiation. Absolutely required for precartilaginous condensation, the first step in chondrogenesis during which skeletal progenitors differentiate into prechondrocytes. Together with SOX5 and SOX6, required for overt chondrogenesis when condensed prechondrocytes differentiate into early stage chondrocytes, the second step in chondrogenesis. Later, required to direct hypertrophic maturation and block osteoblast differentiation of growth plate chondrocytes: maintains chondrocyte columnar proliferation, delays prehypertrophy and then prevents osteoblastic differentiation of chondrocytes by lowering beta-catenin (CTNNB1) signaling and RUNX2 expression. Also required for chondrocyte hypertrophy, both indirectly, by keeping the lineage fate of chondrocytes, and directly, by remaining present in upper hypertrophic cells and transactivating COL10A1 along with MEF2C. Low lipid levels are the main nutritional determinant for chondrogenic commitment of skeletal progenitor cells: when lipids levels are low, FOXO (FOXO1 and FOXO3) transcription factors promote expression of SOX9, which induces chondrogenic commitment and suppresses fatty acid oxidation. Mechanistically, helps, but is not required, to remove epigenetic signatures of transcriptional repression and deposit active promoter and enhancer marks at chondrocyte-specific genes. Acts in cooperation with the Hedgehog pathway-dependent GLI (GLI1 and GLI3) transcription factors. In addition to cartilage development, also acts as a regulator of proliferation and differentiation in epithelial stem/progenitor cells: involved in the lung epithelium during branching morphogenesis, by balancing proliferation and differentiation and regulating the extracellular matrix. Controls epithelial branching during kidney development. This Canis lupus familiaris (Dog) protein is Transcription factor SOX-9 (SOX9).